The chain runs to 168 residues: Pathogenesis-related protein 1A (168 aa).

A signal peptide spans 1 to 30 (MGFVLFSQLPSFLLVSTLLLFLVISHSCRA). In terms of domain architecture, SCP spans 38 to 156 (LDAHNTARAD…NGGYVVSCNY (119 aa)).

It belongs to the CRISP family. Three disulfide bonds are present.

The protein resides in the vacuole. Functionally, probably involved in the defense reaction of plants against pathogens. The chain is Pathogenesis-related protein 1A from Nicotiana tabacum (Common tobacco).